The chain runs to 172 residues: 3-hydroxydecanoyl-[acyl-carrier-protein] dehydratase (172 aa).

His-71 is a catalytic residue.

It belongs to the thioester dehydratase family. FabA subfamily. Homodimer.

Its subcellular location is the cytoplasm. The enzyme catalyses a (3R)-hydroxyacyl-[ACP] = a (2E)-enoyl-[ACP] + H2O. It catalyses the reaction (3R)-hydroxydecanoyl-[ACP] = (2E)-decenoyl-[ACP] + H2O. It carries out the reaction (2E)-decenoyl-[ACP] = (3Z)-decenoyl-[ACP]. It participates in lipid metabolism; fatty acid biosynthesis. Its function is as follows. Necessary for the introduction of cis unsaturation into fatty acids. Catalyzes the dehydration of (3R)-3-hydroxydecanoyl-ACP to E-(2)-decenoyl-ACP and then its isomerization to Z-(3)-decenoyl-ACP. Can catalyze the dehydratase reaction for beta-hydroxyacyl-ACPs with saturated chain lengths up to 16:0, being most active on intermediate chain length. The chain is 3-hydroxydecanoyl-[acyl-carrier-protein] dehydratase from Vibrio cholerae serotype O1 (strain ATCC 39541 / Classical Ogawa 395 / O395).